We begin with the raw amino-acid sequence, 372 residues long: Transcription factor YY2 (372 aa).

Residues 32-102 (MEDIPTESVQ…SDNQLGNDLE (71 aa)) form a mediates transcriptional activation region. The segment covering 126 to 136 (SAASTSTSTQS) has biased composition (low complexity). Disordered stretches follow at residues 126–172 (SAAS…WEQK) and 186–210 (TMWS…PPDY). Residues 137–146 (RSKKPSKKPS) show a composition bias toward basic residues. Polar residues-rich tracts occupy residues 154–165 (EANPAGSSSSLG) and 186–196 (TMWSPNDNNDQ). Positions 237-372 (EFTKVKPKRS…LTHVKTKNNP (136 aa)) are mediates transcriptional repression. 4 consecutive C2H2-type zinc fingers follow at residues 254-278 (VPCS…LHIH), 283-305 (HVCA…QLVH), 311-335 (FQCT…LRIH), and 341-365 (FVCP…ILTH).

It belongs to the YY transcription factor family. Expressed in kidney, liver, spleen and testis but not in colon.

The protein resides in the nucleus. Functionally, functions as a multifunctional transcription factor that may exhibit positive and negative control on a large number of genes. May antagonize YY1 and function in development and differentiation. The sequence is that of Transcription factor YY2 (YY2) from Homo sapiens (Human).